Consider the following 507-residue polypeptide: Zinc finger protein Aiolos (507 aa).

The disordered stretch occupies residues 1-85 (MEDIQPTVEL…PMGDAEESEM (85 aa)). Threonine 20 is subject to Phosphothreonine. Residues serine 22 and serine 42 each carry the phosphoserine modification. 2 stretches are compositionally biased toward basic and acidic residues: residues 33 to 46 (KPHE…REAP) and 56 to 72 (DSMK…ENIM). Residues lysine 61, lysine 73, and lysine 100 each participate in a glycyl lysine isopeptide (Lys-Gly) (interchain with G-Cter in SUMO2) cross-link. C2H2-type zinc fingers lie at residues 117–139 (MNCD…KRSH), 145–167 (FQCN…IKLH), and 173–195 (FKCH…LRTH). Residues 201-223 (YKCEFCGRSYKQRSSLEEHKERC) form a C2H2-type 4; atypical zinc finger. Residue lysine 244 forms a Glycyl lysine isopeptide (Lys-Gly) (interchain with G-Cter in SUMO2) linkage. Threonine 325 carries the phosphothreonine modification. The segment at 370–396 (LPSERGLSPNNSAQDSTDTDSNHEDRQ) is disordered. The residue at position 377 (serine 377) is a Phosphoserine. The C2H2-type 5 zinc finger occupies 450–472 (FRCDHCHVLFLDYVMFTIHMGCH). Positions 450–502 (FRCDHCHVLFLDYVMFTIHMGCHGFRDPFECNMCGYRSHDRYEFSSHIARGEH) are mediates homodimerization and heterodimerization. A C2H2-type 6; atypical zinc finger spans residues 478 to 502 (FECNMCGYRSHDRYEFSSHIARGEH).

This sequence belongs to the Ikaros C2H2-type zinc-finger protein family. Homodimer. Heterodimer with other IKAROS family members. Interacts with IKZF4 and IKZF5. Interacts with HRAS. Interacts with FOXP3; this interaction may be required for silencing target genes and regulating the suppressive activity of FOXP3-positive regulatory T-cells (Treg). Interacts with BCL21L isoform Bcl-X(L); this interaction blocks the anti-apoptotic role of BCL21L. Associates with histone deacetylase complexes containing HDAC1, MTA2 and SIN3A. Interacts with IKZF1. In terms of tissue distribution, expression is restricted to lymphoid tissues. Expressed at highest levels in spleen and at lower levels in the thymus and bone marrow. First detected in more committed lymphoid progenitors and strongly up-regulated as these differentiate into pre-T and pre-B cell precursors.

Its subcellular location is the nucleus. The protein resides in the cytoplasm. Functionally, transcription factor that plays an important role in the regulation of lymphocyte differentiation. Binds to GGGAA. Plays an essential role in regulation of B-cell differentiation, proliferation and maturation to an effector state. Involved in regulating BCL2 expression and controlling apoptosis in T-cells in an IL2-dependent manner. The sequence is that of Zinc finger protein Aiolos (Ikzf3) from Mus musculus (Mouse).